Consider the following 481-residue polypeptide: Glutamyl-tRNA(Gln) amidotransferase subunit A (481 aa).

Residues Lys-74 and Ser-149 each act as charge relay system in the active site. The active-site Acyl-ester intermediate is the Ser-173.

This sequence belongs to the amidase family. GatA subfamily. As to quaternary structure, heterotrimer of A, B and C subunits.

It carries out the reaction L-glutamyl-tRNA(Gln) + L-glutamine + ATP + H2O = L-glutaminyl-tRNA(Gln) + L-glutamate + ADP + phosphate + H(+). Its function is as follows. Allows the formation of correctly charged Gln-tRNA(Gln) through the transamidation of misacylated Glu-tRNA(Gln) in organisms which lack glutaminyl-tRNA synthetase. The reaction takes place in the presence of glutamine and ATP through an activated gamma-phospho-Glu-tRNA(Gln). The polypeptide is Glutamyl-tRNA(Gln) amidotransferase subunit A (Francisella philomiragia subsp. philomiragia (strain ATCC 25017 / CCUG 19701 / FSC 153 / O#319-036)).